A 210-amino-acid polypeptide reads, in one-letter code: Cytochrome c biogenesis ATP-binding export protein CcmA (210 aa).

The 207-residue stretch at 3-209 (LTVTNLACAR…PADDPFAGVT (207 aa)) folds into the ABC transporter domain. 35-42 (GPNGIGKT) contributes to the ATP binding site.

This sequence belongs to the ABC transporter superfamily. CcmA exporter (TC 3.A.1.107) family. As to quaternary structure, the complex is composed of two ATP-binding proteins (CcmA) and two transmembrane proteins (CcmB).

The protein localises to the cell inner membrane. It carries out the reaction heme b(in) + ATP + H2O = heme b(out) + ADP + phosphate + H(+). Part of the ABC transporter complex CcmAB involved in the biogenesis of c-type cytochromes; once thought to export heme, this seems not to be the case, but its exact role is uncertain. Responsible for energy coupling to the transport system. This chain is Cytochrome c biogenesis ATP-binding export protein CcmA, found in Cereibacter sphaeroides (strain ATCC 17023 / DSM 158 / JCM 6121 / CCUG 31486 / LMG 2827 / NBRC 12203 / NCIMB 8253 / ATH 2.4.1.) (Rhodobacter sphaeroides).